A 413-amino-acid chain; its full sequence is Paxillin homolog 1 (413 aa).

Positions 33 to 45 (HISDRRSQSRDDF) are enriched in basic and acidic residues. The tract at residues 33-157 (HISDRRSQSR…PLHSDSMIGT (125 aa)) is disordered. The segment covering 49 to 69 (YDLQGNLNTQSVSNGNITTSP) has biased composition (polar residues). Over residues 73-92 (RSSEGKDYSKSQERIYENES) the composition is skewed to basic and acidic residues. The span at 118–143 (ASSSRKSLGPPSQAQSYSDVRSNGRS) shows a compositional bias: polar residues. LIM zinc-binding domains follow at residues 174 to 232 (GDCA…NQFS), 233 to 292 (PKCQ…LFAP), 293 to 350 (KCNG…ESRG), and 351 to 410 (SICS…TYAL).

Belongs to the paxillin family. In terms of tissue distribution, isoform a: Expressed in all 95 body wall muscle cells as well as in the pharyngeal muscle cells (at protein level). Isoform c: Expressed in the body wall muscle cells and in the pharyngeal muscle cells.

The protein localises to the cell junction. It is found in the adherens junction. Its subcellular location is the cell membrane. It localises to the cytoplasm. The protein resides in the myofibril. The protein localises to the sarcomere. It is found in the m line. Its subcellular location is the cell projection. It localises to the podosome. Functionally, required for myofilament organization of the pharyngeal sarcomeres and for pharyngeal muscle contractions and hence for pharyngeal pumping. Together with lin-8, might be required for myofilament organization in the body wall muscles. The sequence is that of Paxillin homolog 1 (pxl-1) from Caenorhabditis elegans.